A 224-amino-acid polypeptide reads, in one-letter code: Cytidylate kinase (224 aa).

11–19 serves as a coordination point for ATP; that stretch reads GPAAAGKST.

The protein belongs to the cytidylate kinase family. Type 1 subfamily.

The protein localises to the cytoplasm. The catalysed reaction is CMP + ATP = CDP + ADP. It catalyses the reaction dCMP + ATP = dCDP + ADP. This is Cytidylate kinase from Geobacillus kaustophilus (strain HTA426).